The chain runs to 344 residues: MSILIDNVSKNFGDFQAVADIRLEIQPGNLVALLGPSGCGKSTLLRLIAGLELPDSGQIWLEGQDATRQRLQERNIGFVFQHYALFKHLTVAQNIAFGLEVRKTPKAQIKARVEELLELVQLAGYGGRYPAQLSGGQRQRVALARALAVEPRVLLLDEPFGALDARVRKDLRAWLRRLHDEVHVTTIFVTHDPEEALEVSDTIVVMNKGRVEQVGSPVEIYDHPESAFVMSFLGQVNTLPNSPELFPQLSEAVREVLVRPHDLSLSVQAGGPALAARVERLMYLGWQVQAELVLEAGQPLIVQLSREQADRLQLRPDQPVYVQVRNPKIFPAVAADKQLAEAAA.

One can recognise an ABC transporter domain in the interval 3–233 (ILIDNVSKNF…PESAFVMSFL (231 aa)). Residue 35–42 (GPSGCGKS) participates in ATP binding.

It belongs to the ABC transporter superfamily. Sulfate/tungstate importer (TC 3.A.1.6) family. As to quaternary structure, the complex is composed of two ATP-binding proteins (CysA), two transmembrane proteins (CysT and CysW) and a solute-binding protein (CysP).

It localises to the cell inner membrane. It catalyses the reaction sulfate(out) + ATP + H2O = sulfate(in) + ADP + phosphate + H(+). It carries out the reaction thiosulfate(out) + ATP + H2O = thiosulfate(in) + ADP + phosphate + H(+). Functionally, part of the ABC transporter complex CysAWTP involved in sulfate/thiosulfate import. Responsible for energy coupling to the transport system. The sequence is that of Sulfate/thiosulfate import ATP-binding protein CysA from Gloeobacter violaceus (strain ATCC 29082 / PCC 7421).